The following is a 611-amino-acid chain: Creatine transporter (611 aa).

Residues phenylalanine 45–leucine 65 form a helical membrane-spanning segment. Topologically, residues cysteine 66 to glycine 71 are extracellular. Residues glycine 72–leucine 92 traverse the membrane as a helical segment. The Cytoplasmic portion of the chain corresponds to glutamate 93–methionine 122. The helical transmembrane segment at valine 123–leucine 143 threads the bilayer. The Extracellular segment spans residues valine 144–glutamate 207. N-linked (GlcNAc...) asparagine glycosylation is found at asparagine 157 and asparagine 171. A helical transmembrane segment spans residues isoleucine 208–tryptophan 228. Residues lysine 229–tyrosine 246 are Cytoplasmic-facing. The helical transmembrane segment at isoleucine 247–valine 267 threads the bilayer. The Extracellular segment spans residues tyrosine 268–glutamine 281. The chain crosses the membrane as a helical span at residues valine 282–threonine 302. Topologically, residues alanine 303–alanine 318 are cytoplasmic. A helical transmembrane segment spans residues phenylalanine 319–isoleucine 339. At leucine 340–threonine 371 the chain is on the extracellular side. Residues leucine 372–leucine 392 form a helical membrane-spanning segment. The Cytoplasmic portion of the chain corresponds to glycine 393 to glutamate 421. Residues valine 422–glycine 442 form a helical membrane-spanning segment. At glycine 443–serine 456 the chain is on the extracellular side. The chain crosses the membrane as a helical span at residues glycine 457 to glycine 477. Over aspartate 478 to lysine 497 the chain is Cytoplasmic. The helical transmembrane segment at tryptophan 498–asparagine 518 threads the bilayer. Residues tyrosine 519–isoleucine 537 lie on the Extracellular side of the membrane. An N-linked (GlcNAc...) asparagine glycan is attached at asparagine 525. Residues glycine 538–serine 558 form a helical membrane-spanning segment. Topologically, residues arginine 559–leucine 611 are cytoplasmic.

It belongs to the sodium:neurotransmitter symporter (SNF) (TC 2.A.22) family.

It is found in the membrane. Required for the uptake of creatine. The protein is Creatine transporter of Torpedo marmorata (Marbled electric ray).